Here is an 89-residue protein sequence, read N- to C-terminus: Small ribosomal subunit protein uS15 (89 aa).

This sequence belongs to the universal ribosomal protein uS15 family. As to quaternary structure, part of the 30S ribosomal subunit. Forms a bridge to the 50S subunit in the 70S ribosome, contacting the 23S rRNA.

Its function is as follows. One of the primary rRNA binding proteins, it binds directly to 16S rRNA where it helps nucleate assembly of the platform of the 30S subunit by binding and bridging several RNA helices of the 16S rRNA. Forms an intersubunit bridge (bridge B4) with the 23S rRNA of the 50S subunit in the ribosome. The sequence is that of Small ribosomal subunit protein uS15 from Bordetella parapertussis (strain 12822 / ATCC BAA-587 / NCTC 13253).